We begin with the raw amino-acid sequence, 101 residues long: Small ribosomal subunit protein uS14 (101 aa).

The protein belongs to the universal ribosomal protein uS14 family. As to quaternary structure, part of the 30S ribosomal subunit. Contacts proteins S3 and S10.

Functionally, binds 16S rRNA, required for the assembly of 30S particles and may also be responsible for determining the conformation of the 16S rRNA at the A site. The polypeptide is Small ribosomal subunit protein uS14 (Blochmanniella floridana).